The primary structure comprises 1946 residues: Integrin beta-like protein E (1946 aa).

The N-terminal stretch at 1–22 is a signal peptide; it reads MNNLFKFLFVLLAIFCPPISDL. The Extracellular segment spans residues 23–1875; that stretch reads VVSHGVPQQH…ATTQTTNNKT (1853 aa). N-linked (GlcNAc...) asparagine glycans are attached at residues N107, N134, and N203. Residues 423-460 form the EGF-like domain; the sequence is YGQNCDPTPPCDKGIPNEGILGDGKCMCINGYSGDKCD. Intrachain disulfides connect C433-C448 and C450-C459. Residues 514–699 form the VWFA domain; the sequence is DVFVLVDVNV…AGLKSVLSNV (186 aa). N-linked (GlcNAc...) asparagine glycosylation is found at N705, N860, N1043, N1113, N1177, N1374, N1401, N1513, N1611, N1620, N1662, N1671, N1737, N1743, N1762, N1812, N1852, and N1873. A helical transmembrane segment spans residues 1876–1896; that stretch reads VLTGAIAGAAAGTALIAAAAW. Topologically, residues 1897–1946 are cytoplasmic; the sequence is KLLRKAAPPTDTFFSEAAFLGDGVNANPLYEQSASAAENPLYQSASDNTD.

It belongs to the SIB family. As to quaternary structure, interacts with talA/talin.

Its subcellular location is the membrane. Its function is as follows. Implicated in cellular adhesion. This is Integrin beta-like protein E (sibE) from Dictyostelium discoideum (Social amoeba).